Here is a 638-residue protein sequence, read N- to C-terminus: 1-deoxy-D-xylulose-5-phosphate synthase (638 aa).

Thiamine diphosphate contacts are provided by residues histidine 79 and 120 to 122 (GHS). Aspartate 151 contributes to the Mg(2+) binding site. Thiamine diphosphate is bound by residues 152 to 153 (GA), asparagine 182, tyrosine 291, and glutamate 373. Asparagine 182 lines the Mg(2+) pocket.

This sequence belongs to the transketolase family. DXPS subfamily. Homodimer. It depends on Mg(2+) as a cofactor. The cofactor is thiamine diphosphate.

The catalysed reaction is D-glyceraldehyde 3-phosphate + pyruvate + H(+) = 1-deoxy-D-xylulose 5-phosphate + CO2. The protein operates within metabolic intermediate biosynthesis; 1-deoxy-D-xylulose 5-phosphate biosynthesis; 1-deoxy-D-xylulose 5-phosphate from D-glyceraldehyde 3-phosphate and pyruvate: step 1/1. Its function is as follows. Catalyzes the acyloin condensation reaction between C atoms 2 and 3 of pyruvate and glyceraldehyde 3-phosphate to yield 1-deoxy-D-xylulose-5-phosphate (DXP). This Xanthomonas euvesicatoria pv. vesicatoria (strain 85-10) (Xanthomonas campestris pv. vesicatoria) protein is 1-deoxy-D-xylulose-5-phosphate synthase.